Reading from the N-terminus, the 137-residue chain is Protein MGF 110-7L (137 aa).

The signal sequence occupies residues 1–20 (MLVIILGVIGLLASSNLVSS). N-linked (GlcNAc...) asparagine; by host glycosylation is found at Asn-69, Asn-70, and Asn-105.

The protein belongs to the asfaviruses V110 family.

The protein is Protein MGF 110-7L of Ornithodoros (relapsing fever ticks).